The chain runs to 115 residues: Large ribosomal subunit protein bL19 (115 aa).

The protein belongs to the bacterial ribosomal protein bL19 family.

Functionally, this protein is located at the 30S-50S ribosomal subunit interface and may play a role in the structure and function of the aminoacyl-tRNA binding site. This is Large ribosomal subunit protein bL19 from Nitratidesulfovibrio vulgaris (strain DSM 19637 / Miyazaki F) (Desulfovibrio vulgaris).